The sequence spans 165 residues: Cytochrome c-type biogenesis protein CcmE (165 aa).

At 1–7 (MTRKQKR) the chain is on the cytoplasmic side. The chain crosses the membrane as a helical; Signal-anchor for type II membrane protein span at residues 8–28 (LAVIAGGMGFIIAAVLLVMFA). At 29–165 (FSQSVAYFYM…GQGQEAKATR (137 aa)) the chain is on the periplasmic side. Residues H124 and Y128 each contribute to the heme site. A compositionally biased stretch (low complexity) spans 144-154 (QDGQGAQSQAG). The disordered stretch occupies residues 144-165 (QDGQGAQSQAGQGQGQEAKATR).

Belongs to the CcmE/CycJ family.

The protein resides in the cell inner membrane. In terms of biological role, heme chaperone required for the biogenesis of c-type cytochromes. Transiently binds heme delivered by CcmC and transfers the heme to apo-cytochromes in a process facilitated by CcmF and CcmH. The chain is Cytochrome c-type biogenesis protein CcmE from Rhizobium etli (strain CIAT 652).